The sequence spans 525 residues: Probable protein kinase UbiB (525 aa).

A Protein kinase domain is found at 118-500 (DFERVPVASA…QKRTNRLLQG (383 aa)). Residues 124–132 (VASASIAQV) and Lys-150 each bind ATP. The active-site Proton acceptor is Asp-285. The helical transmembrane segment at 501-521 (LLLFGVAVGVGAALARVFLAL) threads the bilayer.

The protein belongs to the ABC1 family. UbiB subfamily.

The protein localises to the cell inner membrane. It functions in the pathway cofactor biosynthesis; ubiquinone biosynthesis [regulation]. Its function is as follows. Is probably a protein kinase regulator of UbiI activity which is involved in aerobic coenzyme Q (ubiquinone) biosynthesis. The protein is Probable protein kinase UbiB of Paraburkholderia xenovorans (strain LB400).